Consider the following 46-residue polypeptide: uncharacterized protein (46 aa).

It to equivalent protein in phage 82.

This is an uncharacterized protein from Escherichia coli (strain K12).